A 208-amino-acid chain; its full sequence is Methylthioribulose-1-phosphate dehydratase (208 aa).

Residues H98 and H100 each coordinate Zn(2+).

It belongs to the aldolase class II family. MtnB subfamily. The cofactor is Zn(2+).

It catalyses the reaction 5-(methylsulfanyl)-D-ribulose 1-phosphate = 5-methylsulfanyl-2,3-dioxopentyl phosphate + H2O. Its pathway is amino-acid biosynthesis; L-methionine biosynthesis via salvage pathway; L-methionine from S-methyl-5-thio-alpha-D-ribose 1-phosphate: step 2/6. Functionally, catalyzes the dehydration of methylthioribulose-1-phosphate (MTRu-1-P) into 2,3-diketo-5-methylthiopentyl-1-phosphate (DK-MTP-1-P). This Marinobacter nauticus (strain ATCC 700491 / DSM 11845 / VT8) (Marinobacter aquaeolei) protein is Methylthioribulose-1-phosphate dehydratase.